The primary structure comprises 305 residues: Cytochrome c biogenesis protein CcsA (305 aa).

8 helical membrane passes run 4–24 (VLGLGLFAFALLLLALPLAFW), 32–52 (SGLVTLLIATANLALTAQLVL), 58–78 (GHFPISNLYESLCFLAWACTL), 91–111 (IVAAAATPMGLGCIAFASFAL), 136–156 (VIMVSYAALLVGSLLSVAVLV), 212–232 (TITVGFLLLTVGIISGAVWAN), 246–263 (TWALICWLVYAAYLHTRL), and 275–295 (VASAGLVVIGVCYIGVNLLGI).

It belongs to the CcmF/CycK/Ccl1/NrfE/CcsA family. In terms of assembly, may interact with ccs1.

It localises to the cellular thylakoid membrane. Required during biogenesis of c-type cytochromes (cytochrome c6 and cytochrome f) at the step of heme attachment. This is Cytochrome c biogenesis protein CcsA from Synechococcus sp. (strain CC9311).